A 641-amino-acid polypeptide reads, in one-letter code: Soluble starch synthase 1, chloroplastic/amyloplastic (641 aa).

K145 provides a ligand contact to ADP-alpha-D-glucose.

It belongs to the glycosyltransferase 1 family. Bacterial/plant glycogen synthase subfamily. High expression in leaves and very low in tubers.

The protein resides in the plastid. Its subcellular location is the chloroplast. It is found in the amyloplast. The enzyme catalyses [(1-&gt;4)-alpha-D-glucosyl](n) + ADP-alpha-D-glucose = [(1-&gt;4)-alpha-D-glucosyl](n+1) + ADP + H(+). It participates in glycan biosynthesis; starch biosynthesis. Functionally, plays a minor role in starch synthesis in storage organs (tubers), but may contribute to the deposition of transient starch in chloroplasts of leaves. This chain is Soluble starch synthase 1, chloroplastic/amyloplastic, found in Solanum tuberosum (Potato).